The primary structure comprises 271 residues: Chorismate dehydratase (271 aa).

It belongs to the MqnA/MqnD family. MqnA subfamily.

It catalyses the reaction chorismate = 3-[(1-carboxyvinyl)-oxy]benzoate + H2O. It functions in the pathway quinol/quinone metabolism; menaquinone biosynthesis. In terms of biological role, catalyzes the dehydration of chorismate into 3-[(1-carboxyvinyl)oxy]benzoate, a step in the biosynthesis of menaquinone (MK, vitamin K2). This chain is Chorismate dehydratase, found in Thermus thermophilus (strain ATCC 27634 / DSM 579 / HB8).